A 1324-amino-acid chain; its full sequence is MTEKKPIFFNRIIDKKGLRDLIAWSFSNFGTARTAEMADKIKDLGFHYATRAGVSISVDDLLVPPKKQELLEAAEKEIKTAQERYSRGEITEVERFQKVIDTWNSTNEELKNEVVRHFRNTDVLNSVYMMAFSGARGNLSQVRQLVGMRGLMANPQGEIIDLPIKTNFREGLTVTEYIISSYGARKGLVDTALRTADSGYLTRRLVDVSQDVIIREEDCETERGITLRSMTVGDKVLALQDRLLGRVVLNDVRHPQTGEVLVAKNQAISADLAKKIVDAGIEEVVVRSPLTCEATGSVCRLCYGWSLAHARLVDMGEAVGIIAAQSIGEPGTQLTMRTFHTGGVFTGEVARQERAPFAGTVEYGKKLRVRPYRTRHGDDAFIVETAGKLVVKGGQQRQEFDLSQGSIVLVADGETVAAGQLLAEVAQAARSVRKATEKVTKDVASDLAGQVKFVNLDAEEKRDRQGTTTRIAPKGGLIWVLSGEVYNLPPGAEPVVKNGDRIEAGAVLAETTVKTEHGGVVRLPEQQDSKGGREVEIITASVMLDKAKVLKETQQGREHYIIETATGQRFSLKAAPGTKVANGQVVAELIDDRYHTTTGGILKYADIEVAKKGKAKQGYEVLKGGTLLWIPEETHEVNKDISLLMVEDNQYVEAGTEVVKDIFCQNSGVVEVIQKNDILREIIIKPGELHLVDDPEAARLKHGTLARPGEEVLPGLVVDTLSQVDYLEDTPEGPAILLRPVQEFSVPDEPSVPSQDSSDGSGQSIRLRAVQRLPYKHDERVKSVDGVDLLRTQLVLEIGSEAPQLAADIEIVTDEVDPEAQRLQLVILESLIIRRDIAADQTQGSTFTSLLVKDGDHIGPGAVIARTDIKAKQAGEVQGIVRSGESVRRILVVTDSDRLRVETNGAKPTVKVGDLVRPGDELAKGVTAPETAAVMAVADDHVILRLARPYLVSPGAVLQIEEGDLVQRGDNLALLVFERAKTGDIIQGLPRIEELLEARHPKEKCVLAVRPGTCQVTYNSDDSVEIKVIEEDGTIQEYPVLPGQNPLVVDGQKVNLADPLTDGPVDPHDILSIYFEYYKPQGLLKAAQTSLEKVQSFLVNEVQSVYLSQGIEIADKHIEVIVRQMTSKVRIDDAGDTILLSGELMTLRQAEQANEPMALTGGAPAQYTPVLLGITKASLNTDSFISAASFQETTRVLTEAAIEGKSDWLRGLKENVIIGRLIPAGTGFNSYEESSNGDEEWEEGEDRLGQTHVISPEPESPKMTVNVTADLGEDVLIDDETAPHVIEKITGGARDFEFASSDVEEDELTEEDDDYGDEEEEDAF.

4 residues coordinate Zn(2+): Cys219, Cys292, Cys299, and Cys302. The segment at 1293-1324 (ARDFEFASSDVEEDELTEEDDDYGDEEEEDAF) is disordered. Residues 1302 to 1324 (DVEEDELTEEDDDYGDEEEEDAF) show a composition bias toward acidic residues.

Belongs to the RNA polymerase beta' chain family. RpoC2 subfamily. As to quaternary structure, in cyanobacteria the RNAP catalytic core is composed of 2 alpha, 1 beta, 1 beta', 1 gamma and 1 omega subunit. When a sigma factor is associated with the core the holoenzyme is formed, which can initiate transcription. The cofactor is Zn(2+).

It carries out the reaction RNA(n) + a ribonucleoside 5'-triphosphate = RNA(n+1) + diphosphate. Functionally, DNA-dependent RNA polymerase catalyzes the transcription of DNA into RNA using the four ribonucleoside triphosphates as substrates. The chain is DNA-directed RNA polymerase subunit beta' from Thermosynechococcus vestitus (strain NIES-2133 / IAM M-273 / BP-1).